Consider the following 373-residue polypeptide: Flagellar P-ring protein (373 aa).

The signal sequence occupies residues 1–26 (MRLLFRFLTLVAVLAMSLADVAPAWA).

Belongs to the FlgI family. In terms of assembly, the basal body constitutes a major portion of the flagellar organelle and consists of four rings (L,P,S, and M) mounted on a central rod.

Its subcellular location is the periplasm. The protein localises to the bacterial flagellum basal body. Assembles around the rod to form the L-ring and probably protects the motor/basal body from shearing forces during rotation. The protein is Flagellar P-ring protein of Rhizobium etli (strain CIAT 652).